We begin with the raw amino-acid sequence, 273 residues long: MPNRTVFFVSDGTGITAETFGNSILAQFAIKPRHVRRPFIDNAEKADQVITEINGAALAEGKRPIVFITIVNDTVREKIGSHSNALVLDMFRTFVEPLEAELQLTSNHRVGRFSDVAKSQEYHDRIEAINFSLAHDDGQSSRNLAEADVILVGVSRSGKTPTSLYLAMQHGIKAANYPLIPEDFERDSIPSSLAPYKRKCFGLTIDADRLSQIRNERRPGSKYAALANCRYEINEAERMMKREGISWLSSTHKSIEEIATTILRDIRPDRLIY.

ADP is bound at residue 153–160 (GVSRSGKT).

The protein belongs to the pyruvate, phosphate/water dikinase regulatory protein family. PSRP subfamily.

It carries out the reaction [pyruvate, water dikinase] + ADP = [pyruvate, water dikinase]-phosphate + AMP + H(+). The catalysed reaction is [pyruvate, water dikinase]-phosphate + phosphate + H(+) = [pyruvate, water dikinase] + diphosphate. Its function is as follows. Bifunctional serine/threonine kinase and phosphorylase involved in the regulation of the phosphoenolpyruvate synthase (PEPS) by catalyzing its phosphorylation/dephosphorylation. The protein is Putative phosphoenolpyruvate synthase regulatory protein of Leptothrix cholodnii (strain ATCC 51168 / LMG 8142 / SP-6) (Leptothrix discophora (strain SP-6)).